The sequence spans 600 residues: Elongation factor 4 (600 aa).

Residues 4–186 (SKIRNFSIIA…AIVEKIPSPS (183 aa)) form the tr-type G domain. Residues 16 to 21 (DHGKST) and 133 to 136 (NKID) each bind GTP.

Belongs to the TRAFAC class translation factor GTPase superfamily. Classic translation factor GTPase family. LepA subfamily.

It is found in the cell membrane. The enzyme catalyses GTP + H2O = GDP + phosphate + H(+). Functionally, required for accurate and efficient protein synthesis under certain stress conditions. May act as a fidelity factor of the translation reaction, by catalyzing a one-codon backward translocation of tRNAs on improperly translocated ribosomes. Back-translocation proceeds from a post-translocation (POST) complex to a pre-translocation (PRE) complex, thus giving elongation factor G a second chance to translocate the tRNAs correctly. Binds to ribosomes in a GTP-dependent manner. This Mycoplasma mycoides subsp. mycoides SC (strain CCUG 32753 / NCTC 10114 / PG1) protein is Elongation factor 4.